The sequence spans 761 residues: MTSVLRGVLKTHLPRTLTLPRCARNFQTTTFLRNEQVKLPQTYDEEKVIIDEINENLKPDDLQASTRLRNIGISAHIDSGKTTFTERVLFYTGRIKAIHEVRGKDSVGAKMDHMDLEREKGITIQSAATYCSWDKDDKSYHFNLIDTPGHIDFTIEVERALRVLDGAVLVVCAVAGVQSQTVTVDRQMRRYNVPRVTFINKMDRMGANPWRAIEQINAKLKIPAAAIQVPIGAEENLQGVVNIIDRVALYNEGSQGETIRKAEIPEDLKELVEEKRALLIETLADVDEEMADIYLEGEEPTVEQIKSAIRRATIGRKFTPVLMGSALANRGIQSVLDSVVDYLPQPNEVLNTGLELQKDGSEKPVHLTPSSSEPFVGLAFKLEEGPYGQLTYIRVYQGKLKKGAYMTHVKTGKKVKVSRLVRMHSNDMEDVAEVGAGEICATFGIDCASGDTFIGQGTQQQITMSSMFVPEAVISLSISPKTKDNGAFSKAMNRFQKEDPTFRVHYDSESKETIISGMGELHLEIYVERIKREYGVDCITGKPQVSYREAITVPSAFDYTHKKQSGGAGQYGRVIGEMNPIESENKFETQIIGGKIPEKFLFACSKGFEDCLEKGPLIGHRVLGVHMLINDGQTHVVDSSELAFRTATHGAFKQAFLNAQPVILEPIMSVEVTAPNEFQGSVVGLINKLGGMINDTVNGPDDFTVTAECSLNSMFGFSTSLRASTQGKGEFSLEFLKYSPTAPQVQKQLIQEYQKAQAAKK.

Residues 1-33 (MTSVLRGVLKTHLPRTLTLPRCARNFQTTTFLR) constitute a mitochondrion transit peptide. The 282-residue stretch at 66–347 (TRLRNIGISA…SVVDYLPQPN (282 aa)) folds into the tr-type G domain. GTP contacts are provided by residues 75–82 (AHIDSGKT), 146–150 (DTPGH), and 200–203 (NKMD).

The protein belongs to the TRAFAC class translation factor GTPase superfamily. Classic translation factor GTPase family. EF-G/EF-2 subfamily.

The protein localises to the mitochondrion. The protein operates within protein biosynthesis; polypeptide chain elongation. In terms of biological role, mitochondrial GTPase that catalyzes the GTP-dependent ribosomal translocation step during translation elongation. During this step, the ribosome changes from the pre-translocational (PRE) to the post-translocational (POST) state as the newly formed A-site-bound peptidyl-tRNA and P-site-bound deacylated tRNA move to the P and E sites, respectively. Catalyzes the coordinated movement of the two tRNA molecules, the mRNA and conformational changes in the ribosome. This Candida dubliniensis (strain CD36 / ATCC MYA-646 / CBS 7987 / NCPF 3949 / NRRL Y-17841) (Yeast) protein is Elongation factor G, mitochondrial.